Here is a 366-residue protein sequence, read N- to C-terminus: Transcription factor MYB28 (366 aa).

2 HTH myb-type domains span residues 9 to 61 (GEGL…TNYL) and 62 to 116 (KPEI…KKRL). 2 DNA-binding regions (H-T-H motif) span residues 37–61 (WRDI…TNYL) and 89–112 (WSVI…NTHL). The tract at residues 124-170 (VTHKPLASSSNPTVDENLNSPNASSSDKQYSRSSSMPFLSRPPPSSC) is disordered. Over residues 130–146 (ASSSNPTVDENLNSPNA) the composition is skewed to polar residues. The span at 147–158 (SSSDKQYSRSSS) shows a compositional bias: low complexity.

Can form complexes with MYC2, MYC3 or MYC4. In terms of tissue distribution, expressed in generative organs, mature leaves and trichomes.

The protein resides in the nucleus. In terms of biological role, major regulator of short-chained aliphatic glucosinolates (GLSs) biosynthesis. Together with MYB29/HAG3 and MYB76/HAG2, promotes aliphatic glucosinolate biosynthesis but represses indolic glucosinolate biosynthesis. Prevents insect performance (e.g. lepidopteran insect Mamestra brassicae and Spodoptera exigua) by promoting glucosinolates. The chain is Transcription factor MYB28 (MYB28) from Arabidopsis thaliana (Mouse-ear cress).